Consider the following 792-residue polypeptide: Xaa-Pro dipeptidyl-peptidase (792 aa).

Active-site charge relay system residues include serine 363, aspartate 482, and histidine 513.

It belongs to the peptidase S15 family. As to quaternary structure, homodimer.

The protein localises to the cytoplasm. The enzyme catalyses Hydrolyzes Xaa-Pro-|- bonds to release unblocked, N-terminal dipeptides from substrates including Ala-Pro-|-p-nitroanilide and (sequentially) Tyr-Pro-|-Phe-Pro-|-Gly-Pro-|-Ile.. Functionally, removes N-terminal dipeptides sequentially from polypeptides having unsubstituted N-termini provided that the penultimate residue is proline. The sequence is that of Xaa-Pro dipeptidyl-peptidase from Lactobacillus delbrueckii subsp. bulgaricus (strain ATCC BAA-365 / Lb-18).